The sequence spans 115 residues: Selenoprotein K homolog (115 aa).

A helical membrane pass occupies residues 29-49 (FIWGILNQITFFFSTLIGGTV). The segment at 48–115 (TVEPRRRPNN…NSASGSUGPK (68 aa)) is disordered. The span at 58-84 (QGGGRRLAGFDGNGNVTGGSGVGGSGP) shows a compositional bias: gly residues. Residues 104–115 (ACNSASGSUGPK) show a composition bias toward polar residues. Residue selenocysteine 112 is a non-standard amino acid, selenocysteine.

It belongs to the selenoprotein K family.

Its subcellular location is the membrane. This is Selenoprotein K homolog (selk) from Dictyostelium discoideum (Social amoeba).